We begin with the raw amino-acid sequence, 409 residues long: NADH-quinone oxidoreductase subunit D (409 aa).

The protein belongs to the complex I 49 kDa subunit family. In terms of assembly, NDH-1 is composed of 14 different subunits. Subunits NuoB, C, D, E, F, and G constitute the peripheral sector of the complex.

It localises to the cell inner membrane. It catalyses the reaction a quinone + NADH + 5 H(+)(in) = a quinol + NAD(+) + 4 H(+)(out). NDH-1 shuttles electrons from NADH, via FMN and iron-sulfur (Fe-S) centers, to quinones in the respiratory chain. The immediate electron acceptor for the enzyme in this species is believed to be ubiquinone. Couples the redox reaction to proton translocation (for every two electrons transferred, four hydrogen ions are translocated across the cytoplasmic membrane), and thus conserves the redox energy in a proton gradient. In Helicobacter pylori (strain HPAG1), this protein is NADH-quinone oxidoreductase subunit D.